The following is a 259-amino-acid chain: Phosphatidylserine decarboxylase proenzyme (259 aa).

Active-site charge relay system; for autoendoproteolytic cleavage activity residues include Asp-86, His-142, and Ser-226. Ser-226 functions as the Schiff-base intermediate with substrate; via pyruvic acid; for decarboxylase activity in the catalytic mechanism. Ser-226 is modified (pyruvic acid (Ser); by autocatalysis).

Belongs to the phosphatidylserine decarboxylase family. PSD-B subfamily. Prokaryotic type I sub-subfamily. As to quaternary structure, heterodimer of a large membrane-associated beta subunit and a small pyruvoyl-containing alpha subunit. Pyruvate is required as a cofactor. Is synthesized initially as an inactive proenzyme. Formation of the active enzyme involves a self-maturation process in which the active site pyruvoyl group is generated from an internal serine residue via an autocatalytic post-translational modification. Two non-identical subunits are generated from the proenzyme in this reaction, and the pyruvate is formed at the N-terminus of the alpha chain, which is derived from the carboxyl end of the proenzyme. The autoendoproteolytic cleavage occurs by a canonical serine protease mechanism, in which the side chain hydroxyl group of the serine supplies its oxygen atom to form the C-terminus of the beta chain, while the remainder of the serine residue undergoes an oxidative deamination to produce ammonia and the pyruvoyl prosthetic group on the alpha chain. During this reaction, the Ser that is part of the protease active site of the proenzyme becomes the pyruvoyl prosthetic group, which constitutes an essential element of the active site of the mature decarboxylase.

Its subcellular location is the cell membrane. It catalyses the reaction a 1,2-diacyl-sn-glycero-3-phospho-L-serine + H(+) = a 1,2-diacyl-sn-glycero-3-phosphoethanolamine + CO2. It participates in phospholipid metabolism; phosphatidylethanolamine biosynthesis; phosphatidylethanolamine from CDP-diacylglycerol: step 2/2. Functionally, catalyzes the formation of phosphatidylethanolamine (PtdEtn) from phosphatidylserine (PtdSer). In Geobacillus sp. (strain WCH70), this protein is Phosphatidylserine decarboxylase proenzyme.